Reading from the N-terminus, the 199-residue chain is N-(5'-phosphoribosyl)anthranilate isomerase (199 aa).

It belongs to the TrpF family.

The enzyme catalyses N-(5-phospho-beta-D-ribosyl)anthranilate = 1-(2-carboxyphenylamino)-1-deoxy-D-ribulose 5-phosphate. Its pathway is amino-acid biosynthesis; L-tryptophan biosynthesis; L-tryptophan from chorismate: step 3/5. The sequence is that of N-(5'-phosphoribosyl)anthranilate isomerase from Campylobacter jejuni subsp. jejuni serotype O:2 (strain ATCC 700819 / NCTC 11168).